Reading from the N-terminus, the 642-residue chain is Threonine--tRNA ligase (642 aa).

A TGS domain is found at 1–61 (MPVIRFCDGS…TEDSSISFIS (61 aa)). The interval 243–534 (DHRKIGKLLN…LIEEFSGKLP (292 aa)) is catalytic. Positions 334, 385, and 511 each coordinate Zn(2+).

It belongs to the class-II aminoacyl-tRNA synthetase family. As to quaternary structure, homodimer. It depends on Zn(2+) as a cofactor.

Its subcellular location is the cytoplasm. It carries out the reaction tRNA(Thr) + L-threonine + ATP = L-threonyl-tRNA(Thr) + AMP + diphosphate + H(+). In terms of biological role, catalyzes the attachment of threonine to tRNA(Thr) in a two-step reaction: L-threonine is first activated by ATP to form Thr-AMP and then transferred to the acceptor end of tRNA(Thr). Also edits incorrectly charged L-seryl-tRNA(Thr). The chain is Threonine--tRNA ligase from Buchnera aphidicola subsp. Schizaphis graminum (strain Sg).